A 199-amino-acid polypeptide reads, in one-letter code: MGLVMRFDLYLMFVMLMGLGFTISNGYKFYVGGKDGWVPTPSEDYSHWSHRNRFQVNDTLHFKYAKGKDSVLEVTEQEYNTCNTTHPLTSLSDGDSLFLLSHSGSYFFISGNSQNCLKGQKLAVKVLSTVHHSHSPRHTSPSPSPVHQELSSPGPSPGVEPSSDSNSRVPAPGPATAPNSAGLVGPGMVVLVIMISSLF.

A signal peptide spans 1-23; sequence MGLVMRFDLYLMFVMLMGLGFTI. The Phytocyanin domain maps to 27-128; that stretch reads YKFYVGGKDG…GQKLAVKVLS (102 aa). 2 N-linked (GlcNAc...) asparagine glycosylation sites follow: N57 and N83. An intrachain disulfide couples C82 to C116. Residues 130 to 180 are disordered; sequence VHHSHSPRHTSPSPSPVHQELSSPGPSPGVEPSSDSNSRVPAPGPATAPNS. The segment covering 138–165 has biased composition (low complexity); that stretch reads HTSPSPSPVHQELSSPGPSPGVEPSSDS. Residue N179 is the site of GPI-anchor amidated asparagine attachment. The propeptide at 180–199 is removed in mature form; sequence SAGLVGPGMVVLVIMISSLF.

Belongs to the early nodulin-like (ENODL) family. Confined to flowers.

The protein localises to the cell membrane. Functionally, may act as a carbohydrate transporter. This chain is Early nodulin-like protein 3, found in Arabidopsis thaliana (Mouse-ear cress).